We begin with the raw amino-acid sequence, 284 residues long: 2-dehydro-3-deoxyphosphooctonate aldolase (284 aa).

The protein belongs to the KdsA family.

The protein resides in the cytoplasm. It carries out the reaction D-arabinose 5-phosphate + phosphoenolpyruvate + H2O = 3-deoxy-alpha-D-manno-2-octulosonate-8-phosphate + phosphate. It functions in the pathway carbohydrate biosynthesis; 3-deoxy-D-manno-octulosonate biosynthesis; 3-deoxy-D-manno-octulosonate from D-ribulose 5-phosphate: step 2/3. The protein operates within bacterial outer membrane biogenesis; lipopolysaccharide biosynthesis. This Aliivibrio fischeri (strain ATCC 700601 / ES114) (Vibrio fischeri) protein is 2-dehydro-3-deoxyphosphooctonate aldolase.